Reading from the N-terminus, the 343-residue chain is NADH-quinone oxidoreductase subunit H (343 aa).

8 helical membrane-spanning segments follow: residues 21 to 41 (WTLV…LFCV), 95 to 115 (FILA…VVPF), 124 to 144 (VNVG…GVLL), 172 to 192 (MGFT…GDIV), 197 to 217 (GLWY…SVVA), 257 to 277 (IIMV…PPIE), 281 to 301 (FIPG…FFLW), and 317 to 337 (LGWK…GLAM).

Belongs to the complex I subunit 1 family. As to quaternary structure, NDH-1 is composed of 14 different subunits. Subunits NuoA, H, J, K, L, M, N constitute the membrane sector of the complex.

The protein localises to the cell inner membrane. It carries out the reaction a quinone + NADH + 5 H(+)(in) = a quinol + NAD(+) + 4 H(+)(out). In terms of biological role, NDH-1 shuttles electrons from NADH, via FMN and iron-sulfur (Fe-S) centers, to quinones in the respiratory chain. The immediate electron acceptor for the enzyme in this species is believed to be ubiquinone. Couples the redox reaction to proton translocation (for every two electrons transferred, four hydrogen ions are translocated across the cytoplasmic membrane), and thus conserves the redox energy in a proton gradient. This subunit may bind ubiquinone. The sequence is that of NADH-quinone oxidoreductase subunit H from Magnetococcus marinus (strain ATCC BAA-1437 / JCM 17883 / MC-1).